The following is an 82-amino-acid chain: Putative ribonuclease VapC34 (82 aa).

D4 is a binding site for Mg(2+).

It belongs to the PINc/VapC protein family. Mg(2+) serves as cofactor.

In terms of biological role, toxic component of a possible type II toxin-antitoxin (TA) system. A putative RNase. Its cognate antitoxin is VapB34. This is Putative ribonuclease VapC34 (vapC34) from Mycobacterium tuberculosis (strain CDC 1551 / Oshkosh).